The chain runs to 387 residues: ATP phosphoribosyltransferase regulatory subunit (387 aa).

Belongs to the class-II aminoacyl-tRNA synthetase family. HisZ subfamily. Heteromultimer composed of HisG and HisZ subunits.

It localises to the cytoplasm. It participates in amino-acid biosynthesis; L-histidine biosynthesis; L-histidine from 5-phospho-alpha-D-ribose 1-diphosphate: step 1/9. Its function is as follows. Required for the first step of histidine biosynthesis. May allow the feedback regulation of ATP phosphoribosyltransferase activity by histidine. This chain is ATP phosphoribosyltransferase regulatory subunit, found in Polynucleobacter asymbioticus (strain DSM 18221 / CIP 109841 / QLW-P1DMWA-1) (Polynucleobacter necessarius subsp. asymbioticus).